A 204-amino-acid chain; its full sequence is uncharacterized protein (204 aa).

Residues 1–17 (MKRLVTGLLALSLFLAA) form the signal peptide. Residues 17–100 (ACGQDSDQQK…NNNQANNNQK (84 aa)) form a disordered region. A lipid anchor (N-palmitoyl cysteine) is attached at C18. C18 carries the S-diacylglycerol cysteine lipid modification. Over residues 23-70 (DQQKDGNKEKDDKAKTEQQDKKTNDSSKDKKDNKDDSKDVNKDNKDNS) the composition is skewed to basic and acidic residues. A compositionally biased stretch (low complexity) spans 71–100 (ANDNQQQSNSNATNNDQNQTNNNQANNNQK).

The protein resides in the cell membrane. This is an uncharacterized protein from Staphylococcus aureus (strain MSSA476).